A 92-amino-acid chain; its full sequence is Small ribosomal subunit protein uS19 (92 aa).

It belongs to the universal ribosomal protein uS19 family.

In terms of biological role, protein S19 forms a complex with S13 that binds strongly to the 16S ribosomal RNA. In Tolumonas auensis (strain DSM 9187 / NBRC 110442 / TA 4), this protein is Small ribosomal subunit protein uS19.